Reading from the N-terminus, the 517-residue chain is MPCGQPGSGAAPALYVVGVDVGSTTVKCHVYDRAAGVRGSSCRKVESLYPRPGWVELDPEVLWSQFVGVIKEAVQAAGLHMRQVAALGISTQRSTFITWHKRTGKPFHNFISWQDLRSAELVNSWNRSLLLKVIHVIFTVLHFFTGNDRYLAPSVLTFSTQQTSMKLSWVFKNIPEADEAAKKNNCCFGTVDTWLLYRLTKGSVFATDYSNASSTGVFEPFTKCWNPTLCHLLSIPMSIYPPVKDTSFNFGSADSEIFGVPVPIMALVADQQSAMFGECCFQPGDVKLTMGTGGFWNVNTGGNLFASHKGLYPLIGWKIGEEVVYLTEGSMSNIGTTIKWAQDINLFTNVDETAKMARSIVDSQGVCFVPGFQVSANDPYLCASFMGLKPTTTRNHLVRAILESVAFRNKQLFDIIVKKVRIPLQTVRADGGVSNNSFVMQMTSDLINKKIEKPSNTDMSSLGAAFLAGLASGLWTDKEQLKKLRQIETVFEPQKDEKEYKPAMDTWMRAVKCSLHW.

ATP is bound by residues serine 23 and threonine 24. Arginine 93, aspartate 270, and glutamine 271 together coordinate glycerol. Residues threonine 292, glycine 335, and glycine 432 each contribute to the ATP site.

The protein belongs to the FGGY kinase family.

The protein resides in the cytoplasm. It catalyses the reaction glycerol + ATP = sn-glycerol 3-phosphate + ADP + H(+). Its pathway is polyol metabolism; glycerol degradation via glycerol kinase pathway; sn-glycerol 3-phosphate from glycerol: step 1/1. Functionally, skin-specific kinase that plays a key role in glycerol metabolism, catalyzing its phosphorylation to produce sn-glycerol 3-phosphate. Involved in skin-specific regulation of sterol regulatory element-binding protein (SREBP) processing and lipid biosynthesis. The chain is Glycerol kinase 5 (GK5) from Gallus gallus (Chicken).